Reading from the N-terminus, the 582-residue chain is ATP-dependent lipid A-core flippase (582 aa).

Helical transmembrane passes span 16–36 (LWPTIAPFKAGLIVAGVALIL), 64–84 (LMWMPLVVIGLMILRGITSYI), 153–173 (IIGLFIMMFYYSWQLSIILIV), 253–273 (PIIQLIASLALAFVLYAASFP), and 275–295 (VMDSLTAGTITVVFSSMIALM). One can recognise an ABC transmembrane type-1 domain in the interval 28–310 (IVAGVALILN…LTNVNAQFQR (283 aa)). Residues 342-578 (VEFRNVTFTY…RGVYAQLHKM (237 aa)) form the ABC transporter domain. An ATP-binding site is contributed by 376 to 383 (GRSGSGKS).

This sequence belongs to the ABC transporter superfamily. Lipid exporter (TC 3.A.1.106) family. In terms of assembly, homodimer.

Its subcellular location is the cell inner membrane. The catalysed reaction is ATP + H2O + lipid A-core oligosaccharideSide 1 = ADP + phosphate + lipid A-core oligosaccharideSide 2.. Its function is as follows. Involved in lipopolysaccharide (LPS) biosynthesis. Translocates lipid A-core from the inner to the outer leaflet of the inner membrane. Transmembrane domains (TMD) form a pore in the inner membrane and the ATP-binding domain (NBD) is responsible for energy generation. The chain is ATP-dependent lipid A-core flippase from Escherichia coli O6:K15:H31 (strain 536 / UPEC).